The sequence spans 24 residues: RRRRRRRRHRRRRGRRGRRSRGRR.

Residues 1–24 (RRRRRRRRHRRRRGRRGRRSRGRR) form a disordered region.

As to expression, testis.

The protein localises to the nucleus. It localises to the chromosome. Protamines substitute for histones in the chromatin of sperm during the haploid phase of spermatogenesis. They compact sperm DNA into a highly condensed, stable and inactive complex. This chain is Sperm protamine P3, found in Octopus vulgaris (Common octopus).